A 232-amino-acid polypeptide reads, in one-letter code: Orotate phosphoribosyltransferase (232 aa).

5-phospho-alpha-D-ribose 1-diphosphate contacts are provided by residues Arg-107, Lys-108, Lys-111, His-113, and 133-141 (EDLTTAGGS). Residue Thr-137 participates in orotate binding.

It belongs to the purine/pyrimidine phosphoribosyltransferase family. PyrE subfamily. In terms of assembly, homodimer. The cofactor is Mg(2+).

It carries out the reaction orotidine 5'-phosphate + diphosphate = orotate + 5-phospho-alpha-D-ribose 1-diphosphate. The protein operates within pyrimidine metabolism; UMP biosynthesis via de novo pathway; UMP from orotate: step 1/2. Its function is as follows. Catalyzes the transfer of a ribosyl phosphate group from 5-phosphoribose 1-diphosphate to orotate, leading to the formation of orotidine monophosphate (OMP). The sequence is that of Orotate phosphoribosyltransferase from Rhizobium meliloti (strain 1021) (Ensifer meliloti).